Reading from the N-terminus, the 452-residue chain is MILSKDIRLLPGSKVEAVIRVSKNIIQEKYNSLLQDYSSRLKIQGFRIGKVPISIIEKKYSEGLRATVLEEVINNSLKEFFKEEPKRPLSYASPTIKEENLRLNLDKDFEFTFVYETYPEFKVPNIDDIDIKVEVPEVFIDDSDIDNEIKSLQIENSIIIEDEEGVVKKDSIVKVDFVELDDLLNEIVSTKRQDFVFTVGKSETYYDFDRDVIGMRINEERVIEKSYITDYKFEELAGSLKKLKIKIKSIKKRDLPLIDDEFAKDISERYNTLDDLKNFIRSKILSLVEEKKEALKLNKFFSTISEKLEIDIPRSMIEAEIEIAFKDAKRQNKMSLEEFKSMFYSSGYNGSDSLKDEILSNLKSKLIIQKMVDLDPIKVTENDLKDEMVRQSENSGVSYEEIKKFYEDQNLIFYLKDDIKRKIVEKKILASLKEVKGKQVSFKDFVNYKICE.

Residues 170–256 (DSIVKVDFVE…IKSIKKRDLP (87 aa)) form the PPIase FKBP-type domain.

It belongs to the FKBP-type PPIase family. Tig subfamily.

It localises to the cytoplasm. It catalyses the reaction [protein]-peptidylproline (omega=180) = [protein]-peptidylproline (omega=0). Functionally, involved in protein export. Acts as a chaperone by maintaining the newly synthesized protein in an open conformation. Functions as a peptidyl-prolyl cis-trans isomerase. The sequence is that of Trigger factor from Borreliella afzelii (strain PKo) (Borrelia afzelii).